Here is a 56-residue protein sequence, read N- to C-terminus: MALGPWQIFLILVIILVLFGAGKLPDVMSDLGKGIRNLKQELKDNKLASTEDESNL.

Residues 1-21 (MALGPWQIFLILVIILVLFGA) form a helical membrane-spanning segment.

It belongs to the TatA/E family. In terms of assembly, the Tat system comprises two distinct complexes: a TatABC complex, containing multiple copies of TatA, TatB and TatC subunits, and a separate TatA complex, containing only TatA subunits. Substrates initially bind to the TatABC complex, which probably triggers association of the separate TatA complex to form the active translocon.

The protein resides in the cell inner membrane. Part of the twin-arginine translocation (Tat) system that transports large folded proteins containing a characteristic twin-arginine motif in their signal peptide across membranes. TatA could form the protein-conducting channel of the Tat system. The sequence is that of Sec-independent protein translocase protein TatA from Ehrlichia ruminantium (strain Welgevonden).